Reading from the N-terminus, the 190-residue chain is MIGNLRGIVDEVCSDHIILNVNDVGYIVYLSAKTLSACSIGSRVKLLIDTYANSRENVTQLYGFISKEEQQCLRLLVKVSGVSYKTAMSILSKLTPEQLFLAIINEDKLALKVSGLGLKLINRIITELNGKVSKLEINNNHFHSISEDALSALINLGYERTKAYDTIKKIEDESPNLDTKDIIRMALKTI.

The tract at residues 1–65 (MIGNLRGIVD…ENVTQLYGFI (65 aa)) is domain I. Residues 66–143 (SKEEQQCLRL…KLEINNNHFH (78 aa)) form a domain II region. The tract at residues 144-147 (SISE) is flexible linker. The segment at 147–190 (EDALSALINLGYERTKAYDTIKKIEDESPNLDTKDIIRMALKTI) is domain III.

Belongs to the RuvA family. As to quaternary structure, homotetramer. Forms an RuvA(8)-RuvB(12)-Holliday junction (HJ) complex. HJ DNA is sandwiched between 2 RuvA tetramers; dsDNA enters through RuvA and exits via RuvB. An RuvB hexamer assembles on each DNA strand where it exits the tetramer. Each RuvB hexamer is contacted by two RuvA subunits (via domain III) on 2 adjacent RuvB subunits; this complex drives branch migration. In the full resolvosome a probable DNA-RuvA(4)-RuvB(12)-RuvC(2) complex forms which resolves the HJ.

It is found in the cytoplasm. Its function is as follows. The RuvA-RuvB-RuvC complex processes Holliday junction (HJ) DNA during genetic recombination and DNA repair, while the RuvA-RuvB complex plays an important role in the rescue of blocked DNA replication forks via replication fork reversal (RFR). RuvA specifically binds to HJ cruciform DNA, conferring on it an open structure. The RuvB hexamer acts as an ATP-dependent pump, pulling dsDNA into and through the RuvAB complex. HJ branch migration allows RuvC to scan DNA until it finds its consensus sequence, where it cleaves and resolves the cruciform DNA. The chain is Holliday junction branch migration complex subunit RuvA from Wolbachia pipientis subsp. Culex pipiens (strain wPip).